We begin with the raw amino-acid sequence, 79 residues long: D-alanyl carrier protein (79 aa).

A Carrier domain is found at 1–77 (MDVKETILNI…KIISGVVELM (77 aa)). O-(pantetheine 4'-phosphoryl)serine is present on Ser35.

This sequence belongs to the DltC family. In terms of processing, 4'-phosphopantetheine is transferred from CoA to a specific serine of apo-DCP.

It is found in the cytoplasm. Its pathway is cell wall biogenesis; lipoteichoic acid biosynthesis. Its function is as follows. Carrier protein involved in the D-alanylation of lipoteichoic acid (LTA). The loading of thioester-linked D-alanine onto DltC is catalyzed by D-alanine--D-alanyl carrier protein ligase DltA. The DltC-carried D-alanyl group is further transferred to cell membrane phosphatidylglycerol (PG) by forming an ester bond, probably catalyzed by DltD. D-alanylation of LTA plays an important role in modulating the properties of the cell wall in Gram-positive bacteria, influencing the net charge of the cell wall. This chain is D-alanyl carrier protein, found in Streptococcus suis (strain 98HAH33).